The primary structure comprises 294 residues: tRNA pseudouridine synthase B (294 aa).

D40 serves as the catalytic Nucleophile.

The protein belongs to the pseudouridine synthase TruB family. Type 1 subfamily.

The catalysed reaction is uridine(55) in tRNA = pseudouridine(55) in tRNA. Functionally, responsible for synthesis of pseudouridine from uracil-55 in the psi GC loop of transfer RNAs. In Synechococcus elongatus (strain ATCC 33912 / PCC 7942 / FACHB-805) (Anacystis nidulans R2), this protein is tRNA pseudouridine synthase B.